We begin with the raw amino-acid sequence, 1515 residues long: Metal resistance protein YCF1 (1515 aa).

Topologically, residues 1–32 are vacuolar; it reads MAGNLVSWACKLCRSPEGFGPISFYGDFTQCF. Residues 33–53 form a helical membrane-spanning segment; it reads IDGVILNLSAIFMITFGIRDL. Topologically, residues 54 to 73 are cytoplasmic; it reads VNLCKKKHSGIKYRRNWIIV. The helical transmembrane segment at 74-94 threads the bilayer; it reads SRMALVLLEIAFVSLASLNIS. At 95-99 the chain is on the vacuolar side; sequence KEEAE. Residues 100–120 form a helical membrane-spanning segment; the sequence is NFTIVSQYASTMLSLFVALAL. Over 121 to 130 the chain is Cytoplasmic; it reads HWIEYDRSVV. Residues 131-151 form a helical membrane-spanning segment; it reads ANTVLLFYWLFETFGNFAKLI. Residues 152-169 lie on the Vacuolar side of the membrane; that stretch reads NILIRHTYEGIWYSGQTG. A helical transmembrane segment spans residues 170-190; sequence FILTLFQVITCASILLLEALP. At 191–278 the chain is on the cytoplasmic side; the sequence is KKPLMPHQHI…QKSNPSLSWA (88 aa). S251 carries the post-translational modification Phosphoserine. A helical transmembrane segment spans residues 279 to 299; it reads ICRTFGSKMLLAAFFKAIHDV. One can recognise an ABC transmembrane type-1 1 domain in the interval 287–590; that stretch reads MLLAAFFKAI…IPMVLNSFIE (304 aa). Residues 300 to 345 lie on the Vacuolar side of the membrane; that stretch reads LAFTQPQLLRILIKFVTDYNSERQDDHSSLQGFENNHPQKLPIVRG. Residues 346–366 form a helical membrane-spanning segment; that stretch reads FLIAFAMFLVGFTQTSVLHQY. Over 367–422 the chain is Cytoplasmic; the sequence is FLNVFNTGMYIKSALTALIYQKSLVLSNEASGLSSTGDIVNLMSVDVQKLQDLTQW. The chain crosses the membrane as a helical span at residues 423–443; it reads LNLIWSGPFQIIICLYSLYKL. Residues 444-446 lie on the Vacuolar side of the membrane; that stretch reads LGN. Residues 447 to 467 traverse the membrane as a helical segment; the sequence is SMWVGVIILVIMMPLNSFLMR. The Cytoplasmic portion of the chain corresponds to 468-530; that stretch reads IQKKLQKSQM…NLTKLGCYMA (63 aa). The helical transmembrane segment at 531-551 threads the bilayer; that stretch reads VTSFQFNIVPFLVSCCTFAVF. At 552-572 the chain is on the vacuolar side; that stretch reads VYTEDRALTTDLVFPALTLFN. Residues 573-593 traverse the membrane as a helical segment; sequence LLSFPLMIIPMVLNSFIEASV. Residues 594-943 lie on the Cytoplasmic side of the membrane; that stretch reads SIGRLFTFFT…VKWNIYLEYA (350 aa). An ABC transporter 1 domain is found at 626–853; sequence INIGDDATFL…ADSPLWKLLN (228 aa). 663–670 contributes to the ATP binding site; sequence GKVGSGKT. Residues S873, S903, and S908 each carry the phosphoserine modification. At T911 the chain carries Phosphothreonine. S914 bears the Phosphoserine mark. The chain crosses the membrane as a helical span at residues 944 to 964; the sequence is KACNPKSVCVFILFIVISMFL. The ABC transmembrane type-1 2 domain maps to 951 to 1235; the sequence is VCVFILFIVI…IVRMTVEVET (285 aa). At 965–1001 the chain is on the vacuolar side; sequence SVMGNVWLKHWSEVNSRYGSNPNAARYLAIYFALGIG. Residues 1002–1023 form a helical membrane-spanning segment; sequence SALATLIQTIVLWVFCTIHASK. The Cytoplasmic portion of the chain corresponds to 1024-1066; the sequence is YLHNLMTNSVLRAPMTFFETTPIGRILNRFSNDIYKVDALLGR. Residues 1067–1087 traverse the membrane as a helical segment; the sequence is TFSQFFVNAVKVTFTITVICA. Position 1088 (T1088) is a topological domain, vacuolar. The helical transmembrane segment at 1089 to 1109 threads the bilayer; the sequence is TWQFIFIIIPLSVFYIYYQQY. At 1110–1180 the chain is on the cytoplasmic side; the sequence is YLRTSRELRR…NANRWLAYRL (71 aa). A helical membrane pass occupies residues 1181-1201; sequence ELIGSIIILGAATLSVFRLKQ. Residues 1202-1205 lie on the Vacuolar side of the membrane; that stretch reads GTLT. Residues 1206–1226 form a helical membrane-spanning segment; the sequence is AGMVGLSLSYALQITQTLNWI. Residues 1227–1515 lie on the Cytoplasmic side of the membrane; sequence VRMTVEVETN…CMEAGLVNEN (289 aa). The ABC transporter 2 domain maps to 1272 to 1507; it reads IKFNNYSTRY…NKSLFYSLCM (236 aa). 1306-1313 serves as a coordination point for ATP; sequence GRTGAGKS.

The protein belongs to the ABC transporter superfamily. ABCC family. Conjugate transporter (TC 3.A.1.208) subfamily.

Its subcellular location is the vacuole membrane. It carries out the reaction Cd(2+)(in) + ATP + H2O = Cd(2+)(out) + ADP + phosphate + H(+). The catalysed reaction is an S-substituted glutathione(in) + ATP + H2O = an S-substituted glutathione(out) + ADP + phosphate + H(+). In terms of biological role, cooperates for the ATP-dependent vacuolar transport of bilirubin and glutathione conjugates. This chain is Metal resistance protein YCF1 (YCF1), found in Saccharomyces cerevisiae (strain ATCC 204508 / S288c) (Baker's yeast).